We begin with the raw amino-acid sequence, 236 residues long: 2,3,4,5-tetrahydropyridine-2,6-dicarboxylate N-acetyltransferase (236 aa).

Belongs to the transferase hexapeptide repeat family. DapH subfamily.

The catalysed reaction is (S)-2,3,4,5-tetrahydrodipicolinate + acetyl-CoA + H2O = L-2-acetamido-6-oxoheptanedioate + CoA. It participates in amino-acid biosynthesis; L-lysine biosynthesis via DAP pathway; LL-2,6-diaminopimelate from (S)-tetrahydrodipicolinate (acetylase route): step 1/3. Catalyzes the transfer of an acetyl group from acetyl-CoA to tetrahydrodipicolinate. The sequence is that of 2,3,4,5-tetrahydropyridine-2,6-dicarboxylate N-acetyltransferase from Geobacillus sp. (strain WCH70).